Reading from the N-terminus, the 238-residue chain is 3-dehydroquinate dehydratase (238 aa).

3-dehydroquinate contacts are provided by residues 35 to 37 (ELR) and Arg-70. His-133 serves as the catalytic Proton donor/acceptor. Residue Lys-160 is the Schiff-base intermediate with substrate of the active site. 2 residues coordinate 3-dehydroquinate: Arg-202 and Gln-225.

It belongs to the type-I 3-dehydroquinase family. As to quaternary structure, homodimer.

The catalysed reaction is 3-dehydroquinate = 3-dehydroshikimate + H2O. The protein operates within metabolic intermediate biosynthesis; chorismate biosynthesis; chorismate from D-erythrose 4-phosphate and phosphoenolpyruvate: step 3/7. In terms of biological role, involved in the third step of the chorismate pathway, which leads to the biosynthesis of aromatic amino acids. Catalyzes the cis-dehydration of 3-dehydroquinate (DHQ) and introduces the first double bond of the aromatic ring to yield 3-dehydroshikimate. This chain is 3-dehydroquinate dehydratase, found in Staphylococcus aureus (strain bovine RF122 / ET3-1).